We begin with the raw amino-acid sequence, 347 residues long: NADH-ubiquinone oxidoreductase chain 2 (347 aa).

Helical transmembrane passes span 1–21, 25–45, 59–79, 96–116, 122–142, 150–170, 201–221, 242–262, 274–294, and 326–346; these read MNPLTFAMILLTIMLGTTIVM, HWLVVWIGFEMNMLAVIPVLM, YFLTQATASMLLMLAIVINLI, IIMTLALAMKLGLAPFHFWVP, IQLSSGLILLTWQKLAPISIL, NLNLLLAMSILSVAIGGWGGL, ALLNLVIYILLTTTTFSVFML, TALLMTMLSLGGLPPLSGFLP, NSVIVPTTMAITALLNLYFYM, and LSPLIILSTLILPLSPILTLL.

The protein belongs to the complex I subunit 2 family. In terms of assembly, core subunit of respiratory chain NADH dehydrogenase (Complex I) which is composed of 45 different subunits. Interacts with TMEM242.

Its subcellular location is the mitochondrion inner membrane. The enzyme catalyses a ubiquinone + NADH + 5 H(+)(in) = a ubiquinol + NAD(+) + 4 H(+)(out). Core subunit of the mitochondrial membrane respiratory chain NADH dehydrogenase (Complex I) which catalyzes electron transfer from NADH through the respiratory chain, using ubiquinone as an electron acceptor. Essential for the catalytic activity and assembly of complex I. This Eidolon helvum (Straw-colored fruit bat) protein is NADH-ubiquinone oxidoreductase chain 2.